The primary structure comprises 259 residues: 2-oxoglutaramate amidase (259 aa).

The CN hydrolase domain occupies 3–238; the sequence is WTISCLQFDI…EGIVRAEIDL (236 aa). Glu-42 acts as the Proton acceptor in catalysis. Catalysis depends on Lys-111, which acts as the Proton donor. Cys-145 (nucleophile) is an active-site residue.

The protein belongs to the carbon-nitrogen hydrolase superfamily. NIT1/NIT2 family.

The enzyme catalyses 2-oxoglutaramate + H2O = 2-oxoglutarate + NH4(+). In terms of biological role, involved in the methylthioribose (MTR) recycling pathway. Probably catalyzes the conversion of 2-oxoglutaramate to 2-oxoglutarate. This Bacillus subtilis (strain 168) protein is 2-oxoglutaramate amidase.